The primary structure comprises 116 residues: MAGRSGDRDEDLLKAVRLIKILYQSNPPPSPEGTRQARRNRRRRWRARQRQIHSIGERILSTYLGRSEEPVPLQLPPLERLNLNCSEDCGTSGTQGVGSPQISVESPTVLESGTEE.

Position 5 is a phosphoserine; by host CK2 (Ser-5). The interval 18–26 (LIKILYQSN) is homomultimerization. The disordered stretch occupies residues 23–49 (YQSNPPPSPEGTRQARRNRRRRWRARQ). The Nuclear localization signal and RNA-binding (RRE) signature appears at 34–50 (TRQARRNRRRRWRARQR). The span at 36-49 (QARRNRRRRWRARQ) shows a compositional bias: basic residues. A Nuclear export signal and binding to XPO1 motif is present at residues 73 to 84 (LQLPPLERLNLN). Residues 86 to 116 (SEDCGTSGTQGVGSPQISVESPTVLESGTEE) form a disordered region. Phosphoserine; by host occurs at positions 92 and 99.

Belongs to the HIV-1 REV protein family. Homomultimer; when bound to the RRE. Multimeric assembly is essential for activity and may involve XPO1. Binds to human KPNB1, XPO1, TNPO1, RANBP5 and IPO7. Interacts with the viral Integrase. Interacts with human KHDRBS1. Interacts with human NAP1; this interaction decreases Rev multimerization and stimulates its activity. Interacts with human DEAD-box helicases DDX3 and DDX24; these interactions may serve for viral RNA export to the cytoplasm and packaging, respectively. Interacts with human PSIP1; this interaction may inhibit HIV-1 DNA integration by promoting dissociation of the Integrase-LEDGF/p75 complex. Post-translationally, asymmetrically arginine dimethylated at one site by host PRMT6. Methylation impairs the RNA-binding activity and export of viral RNA from the nucleus to the cytoplasm. In terms of processing, phosphorylated by protein kinase CK2. Presence of, and maybe binding to the N-terminus of the regulatory beta subunit of CK2 is necessary for CK2-mediated Rev's phosphorylation.

The protein localises to the host nucleus. The protein resides in the host nucleolus. It is found in the host cytoplasm. In terms of biological role, escorts unspliced or incompletely spliced viral pre-mRNAs (late transcripts) out of the nucleus of infected cells. These pre-mRNAs carry a recognition sequence called Rev responsive element (RRE) located in the env gene, that is not present in fully spliced viral mRNAs (early transcripts). This function is essential since most viral proteins are translated from unspliced or partially spliced pre-mRNAs which cannot exit the nucleus by the pathway used by fully processed cellular mRNAs. Rev itself is translated from a fully spliced mRNA that readily exits the nucleus. Rev's nuclear localization signal (NLS) binds directly to KPNB1/Importin beta-1 without previous binding to KPNA1/Importin alpha-1. KPNB1 binds to the GDP bound form of RAN (Ran-GDP) and targets Rev to the nucleus. In the nucleus, the conversion from Ran-GDP to Ran-GTP dissociates Rev from KPNB1 and allows Rev's binding to the RRE in viral pre-mRNAs. Rev multimerization on the RRE via cooperative assembly exposes its nuclear export signal (NES) to the surface. Rev can then form a complex with XPO1/CRM1 and Ran-GTP, leading to nuclear export of the complex. Conversion from Ran-GTP to Ran-GDP mediates dissociation of the Rev/RRE/XPO1/RAN complex, so that Rev can return to the nucleus for a subsequent round of export. Beside KPNB1, also seems to interact with TNPO1/Transportin-1, RANBP5/IPO5 and IPO7/RANBP7 for nuclear import. The nucleoporin-like HRB/RIP is an essential cofactor that probably indirectly interacts with Rev to release HIV RNAs from the perinuclear region to the cytoplasm. In Homo sapiens (Human), this protein is Protein Rev.